A 241-amino-acid chain; its full sequence is Ribonuclease PH (241 aa).

Residues R89 and 127–129 (GTR) each bind phosphate.

Belongs to the RNase PH family. Homohexameric ring arranged as a trimer of dimers.

It catalyses the reaction tRNA(n+1) + phosphate = tRNA(n) + a ribonucleoside 5'-diphosphate. Functionally, phosphorolytic 3'-5' exoribonuclease that plays an important role in tRNA 3'-end maturation. Removes nucleotide residues following the 3'-CCA terminus of tRNAs; can also add nucleotides to the ends of RNA molecules by using nucleoside diphosphates as substrates, but this may not be physiologically important. Probably plays a role in initiation of 16S rRNA degradation (leading to ribosome degradation) during starvation. The sequence is that of Ribonuclease PH from Xylella fastidiosa (strain 9a5c).